We begin with the raw amino-acid sequence, 517 residues long: Ubiquitin carboxyl-terminal hydrolase 30 (517 aa).

The Mitochondrial intermembrane segment spans residues 1–35; that stretch reads MLSSRAEAAMTAADRAIQRFLRTGAAVRYKVMKNW. The chain crosses the membrane as a helical span at residues 36–56; the sequence is GVIGGIAAALAAGIYVIWGPI. Topologically, residues 57–517 are cytoplasmic; the sequence is TERKKRRKGL…HQSQECKSEE (461 aa). Residues 68-502 enclose the USP domain; that stretch reads PGLVNLGNTC…SAYLLFYERV (435 aa). C77 functions as the Nucleophile in the catalytic mechanism. Residues K235 and K289 each participate in a glycyl lysine isopeptide (Lys-Gly) (interchain with G-Cter in ubiquitin) cross-link. The tract at residues 364–395 is disordered; that stretch reads SQHNPKLNKNPGPTLELQDGPGAPTPVLNQPG. Residue H452 is the Proton acceptor of the active site.

This sequence belongs to the peptidase C19 family. Post-translationally, ubiquitinated by parkin (PRKN) at Lys-235 and Lys-289, leading to its degradation. In terms of tissue distribution, expressed in skeletal muscle, pancreas, liver and kidney.

The protein localises to the mitochondrion outer membrane. It carries out the reaction Thiol-dependent hydrolysis of ester, thioester, amide, peptide and isopeptide bonds formed by the C-terminal Gly of ubiquitin (a 76-residue protein attached to proteins as an intracellular targeting signal).. With respect to regulation, inhibited by the diterpenoid derivative 15-oxospiramilactone (S3). In terms of biological role, deubiquitinating enzyme tethered to the mitochondrial outer membrane that acts as a key inhibitor of mitophagy by counteracting the action of parkin (PRKN): hydrolyzes ubiquitin attached by parkin on target proteins, such as RHOT1/MIRO1 and TOMM20, thereby blocking parkin's ability to drive mitophagy. Preferentially cleaves 'Lys-6'- and 'Lys-11'-linked polyubiquitin chains, 2 types of linkage that participate in mitophagic signaling. Does not cleave efficiently polyubiquitin phosphorylated at 'Ser-65'. Acts as a negative regulator of mitochondrial fusion by mediating deubiquitination of MFN1 and MFN2. This chain is Ubiquitin carboxyl-terminal hydrolase 30, found in Homo sapiens (Human).